We begin with the raw amino-acid sequence, 207 residues long: Macrophage immunometabolism regulator (207 aa).

Met1 bears the N-acetylmethionine mark. Residues 1–41 (MEVDVNGESRSALTTLPLPVAEASSPGKAEAEKPRCSSTPC) are disordered. Phosphoserine occurs at positions 25, 140, and 167.

It belongs to the UNC119-binding protein family. As to quaternary structure, interacts with UNC119 and UNC119B; interaction preferentially takes place when UNC119 and UNC119B are unliganded with myristoylated proteins.

The protein localises to the cytoplasm. Its subcellular location is the cell projection. The protein resides in the cilium. Functionally, regulates the macrophage function, by enhancing the resolution of inflammation and wound repair functions mediated by M2 macrophages. The regulation of macrophage function is, due at least in part, to its ability to inhibit glycolysis. May play also a role in trafficking of proteins via its interaction with UNC119 and UNC119B cargo adapters: may help the release of UNC119 and UNC119B cargo or the recycling of UNC119 and UNC119B. May play a role in ciliary membrane localization via its interaction with UNC119B and protein transport into photoreceptor cells. This is Macrophage immunometabolism regulator (MACIR) from Bos taurus (Bovine).